Consider the following 417-residue polypeptide: Gamma-glutamyl phosphate reductase (417 aa).

This sequence belongs to the gamma-glutamyl phosphate reductase family.

Its subcellular location is the cytoplasm. It carries out the reaction L-glutamate 5-semialdehyde + phosphate + NADP(+) = L-glutamyl 5-phosphate + NADPH + H(+). The protein operates within amino-acid biosynthesis; L-proline biosynthesis; L-glutamate 5-semialdehyde from L-glutamate: step 2/2. Catalyzes the NADPH-dependent reduction of L-glutamate 5-phosphate into L-glutamate 5-semialdehyde and phosphate. The product spontaneously undergoes cyclization to form 1-pyrroline-5-carboxylate. The protein is Gamma-glutamyl phosphate reductase of Legionella pneumophila (strain Corby).